A 49-amino-acid chain; its full sequence is MAEHIILECTECGDRSYLSEKNKRKHPERLALKKYCPVERKVTLHRETK.

Belongs to the bacterial ribosomal protein bL33 family.

In Lactobacillus gasseri (strain ATCC 33323 / DSM 20243 / BCRC 14619 / CIP 102991 / JCM 1131 / KCTC 3163 / NCIMB 11718 / NCTC 13722 / AM63), this protein is Large ribosomal subunit protein bL33B.